Consider the following 316-residue polypeptide: Lipoyl synthase (316 aa).

C61, C66, C72, C87, C91, C94, and S301 together coordinate [4Fe-4S] cluster. The Radical SAM core domain occupies 73–290 (FGKGTATFMI…ERAAIEMGFS (218 aa)).

This sequence belongs to the radical SAM superfamily. Lipoyl synthase family. Requires [4Fe-4S] cluster as cofactor.

Its subcellular location is the cytoplasm. It catalyses the reaction [[Fe-S] cluster scaffold protein carrying a second [4Fe-4S](2+) cluster] + N(6)-octanoyl-L-lysyl-[protein] + 2 oxidized [2Fe-2S]-[ferredoxin] + 2 S-adenosyl-L-methionine + 4 H(+) = [[Fe-S] cluster scaffold protein] + N(6)-[(R)-dihydrolipoyl]-L-lysyl-[protein] + 4 Fe(3+) + 2 hydrogen sulfide + 2 5'-deoxyadenosine + 2 L-methionine + 2 reduced [2Fe-2S]-[ferredoxin]. Its pathway is protein modification; protein lipoylation via endogenous pathway; protein N(6)-(lipoyl)lysine from octanoyl-[acyl-carrier-protein]: step 2/2. Catalyzes the radical-mediated insertion of two sulfur atoms into the C-6 and C-8 positions of the octanoyl moiety bound to the lipoyl domains of lipoate-dependent enzymes, thereby converting the octanoylated domains into lipoylated derivatives. The polypeptide is Lipoyl synthase (Nitrosospira multiformis (strain ATCC 25196 / NCIMB 11849 / C 71)).